The chain runs to 137 residues: Small ribosomal subunit protein uS11 (137 aa).

The segment at 1–25 (MADRRRGAARGGAARPRRRERKNIP) is disordered. Basic residues predominate over residues 15-25 (RPRRRERKNIP).

It belongs to the universal ribosomal protein uS11 family. Part of the 30S ribosomal subunit. Interacts with proteins S7 and S18. Binds to IF-3.

Its function is as follows. Located on the platform of the 30S subunit, it bridges several disparate RNA helices of the 16S rRNA. Forms part of the Shine-Dalgarno cleft in the 70S ribosome. The chain is Small ribosomal subunit protein uS11 from Thermomicrobium roseum (strain ATCC 27502 / DSM 5159 / P-2).